The primary structure comprises 62 residues: Photosystem II reaction center protein Z (62 aa).

2 helical membrane passes run 8-28 (ALFALVALSFLLVVGVPVAFA) and 41-61 (FQGVSAWFALVFTVGVLNSLV).

The protein belongs to the PsbZ family. As to quaternary structure, PSII is composed of 1 copy each of membrane proteins PsbA, PsbB, PsbC, PsbD, PsbE, PsbF, PsbH, PsbI, PsbJ, PsbK, PsbL, PsbM, PsbT, PsbY, PsbZ, Psb30/Ycf12, at least 3 peripheral proteins of the oxygen-evolving complex and a large number of cofactors. It forms dimeric complexes.

It is found in the plastid. The protein localises to the chloroplast thylakoid membrane. In terms of biological role, may control the interaction of photosystem II (PSII) cores with the light-harvesting antenna, regulates electron flow through the 2 photosystem reaction centers. PSII is a light-driven water plastoquinone oxidoreductase, using light energy to abstract electrons from H(2)O, generating a proton gradient subsequently used for ATP formation. This chain is Photosystem II reaction center protein Z, found in Nephroselmis olivacea (Green alga).